Reading from the N-terminus, the 651-residue chain is Sodium/potassium/calcium exchanger 2 (651 aa).

Over 1–38 the chain is Cytoplasmic; the sequence is MALCKKTVGSVLEEWCLNEPLFGCKRHQNVRKKLRLIR. The chain crosses the membrane as a helical span at residues 39–59; sequence IIGLLVSVVAISTFSLSISAF. The Extracellular segment spans residues 60–134; sequence FKMETHSTVL…DLFSLEERRK (75 aa). Residues 92-123 are disordered; that stretch reads QNEGSTPDSPTSMKHEAEHDNATEEHSKGEYP. Polar residues predominate over residues 93-103; the sequence is NEGSTPDSPTS. A compositionally biased stretch (basic and acidic residues) spans 104-122; the sequence is MKHEAEHDNATEEHSKGEY. N112 carries N-linked (GlcNAc...) asparagine glycosylation. A helical transmembrane segment spans residues 135–155; that stretch reads GAVILHVIGMIYMFIALAIVC. Topologically, residues 156–179 are cytoplasmic; sequence DEFFVPSLTVITEKLSISDDVAGA. The stretch at 176 to 216 is one Alpha-1 repeat; it reads VAGATFMAAGGSAPELFTSLIGVFISHSNVGIGTIVGSAVF. The chain crosses the membrane as a helical span at residues 180-200; that stretch reads TFMAAGGSAPELFTSLIGVFI. The Extracellular portion of the chain corresponds to 201–206; the sequence is SHSNVG. The chain crosses the membrane as a helical span at residues 207–227; that stretch reads IGTIVGSAVFNILFVIGMCAL. Residues 228-245 lie on the Cytoplasmic side of the membrane; the sequence is FSREILNLTWWPLFRDVS. The helical transmembrane segment at 246–266 threads the bilayer; it reads FYIVDLILLIIFFLDNLIMWW. At 267–459 the chain is on the extracellular side; sequence ESLTLLTAYF…SLAWPDTPRK (193 aa). The span at 304–322 shows a compositional bias: basic and acidic residues; that stretch reads ATTGDAEGKSPTAGDKDDQ. The tract at residues 304-338 is disordered; that stretch reads ATTGDAEGKSPTAGDKDDQTLTTKPRLQRGGSSAS. The segment covering 323-338 has biased composition (polar residues); the sequence is TLTTKPRLQRGGSSAS. A helical membrane pass occupies residues 460 to 480; the sequence is QLTYLLVLPIVFPLWVSLPDV. Residues 481–487 are Cytoplasmic-facing; the sequence is RNPRSRK. A helical transmembrane segment spans residues 488–508; sequence FFPITFFGSISWIAFFSYLMV. At 509–523 the chain is on the extracellular side; that stretch reads WWAHQVGETIGISEE. Residues 524 to 544 form a helical membrane-spanning segment; the sequence is IMGLTILAAGTSIPDLITSVI. Residues 531-562 form an Alpha-2 repeat; the sequence is AAGTSIPDLITSVIVARKGLGDMAVSSSVGSN. The Cytoplasmic portion of the chain corresponds to 545–562; the sequence is VARKGLGDMAVSSSVGSN. Residues 563-583 traverse the membrane as a helical segment; that stretch reads IFDITVGLPLPWLLYAVINNF. At 584–592 the chain is on the extracellular side; sequence SPVTVSSNG. Residues 593-613 form a helical membrane-spanning segment; the sequence is LFCAIVLLFIMLLFVILSIAF. Residues 614–620 are Cytoplasmic-facing; it reads CKWRMNK. Residues 621 to 641 form a helical membrane-spanning segment; it reads FLGFLMFGLYFVFLIVSVLLE. Topologically, residues 642-651 are extracellular; the sequence is DKVIQCPVSI.

Belongs to the Ca(2+):cation antiporter (CaCA) (TC 2.A.19) family. SLC24A subfamily. Retinal cones. Found in the cone inner segment layer and in a subpopulation of ganglion cells.

The protein localises to the cell membrane. The catalysed reaction is Ca(2+)(out) + K(+)(out) + 4 Na(+)(in) = Ca(2+)(in) + K(+)(in) + 4 Na(+)(out). In terms of biological role, calcium, potassium:sodium antiporter that transports 1 Ca(2+) and 1 K(+) in exchange for 4 Na(+). Required for learming and memory by regulating neuronal Ca(2+), which is essential for the development of synaptic plasticity. This is Sodium/potassium/calcium exchanger 2 (SLC24A2) from Gallus gallus (Chicken).